Consider the following 95-residue polypeptide: MAPPPACRSPMSPPPPPLLLLLLSLALLGARARAEPAGSAVPAQSRPCVDCHAFEFMQRALQDLRKTACSLDARTETLLLQAERRALCACWPAGH.

A signal peptide spans 1 to 34 (MAPPPACRSPMSPPPPPLLLLLLSLALLGARARA).

The protein belongs to the NICOL family. As to quaternary structure, interacts with NELL2; triggers epididymal differentiation. Interacts with cell surface receptor TFRC; the interaction mediates uptake of NICOL1 into fibroblasts. As to expression, detected in the brain (at protein level). Also expressed at low levels in the kidney, primarily in tubular epithelial cells.

It is found in the secreted. The protein resides in the cytoplasm. The protein localises to the perinuclear region. In terms of biological role, mRNA-binding protein which interacts with a range of target mRNAs including SERPINE1, ACTA2, CCN2 and COL4A1 and may promote extracellular matrix production. Binds to the 3'-UTR of SERPINE1 mRNA and stabilizes the mRNA, possibly by competing for binding with SERBP1 and preventing SERBP1-mediated mRNA degradation. Also binds to the 3'-UTR of ACTA2. Testis-derived lumicrine factor that triggers epididymal differentiation and sperm maturation. This chain is NELL2-interacting cell ontogeny regulator 1, found in Homo sapiens (Human).